The primary structure comprises 293 residues: Ribosomal protein L11 methyltransferase (293 aa).

4 residues coordinate S-adenosyl-L-methionine: Thr145, Gly166, Asp188, and Asn230.

This sequence belongs to the methyltransferase superfamily. PrmA family.

Its subcellular location is the cytoplasm. It carries out the reaction L-lysyl-[protein] + 3 S-adenosyl-L-methionine = N(6),N(6),N(6)-trimethyl-L-lysyl-[protein] + 3 S-adenosyl-L-homocysteine + 3 H(+). Its function is as follows. Methylates ribosomal protein L11. This is Ribosomal protein L11 methyltransferase from Escherichia coli (strain SMS-3-5 / SECEC).